The sequence spans 342 residues: Nicotinate-nucleotide--dimethylbenzimidazole phosphoribosyltransferase (342 aa).

Glu311 (proton acceptor) is an active-site residue.

Belongs to the CobT family.

It catalyses the reaction 5,6-dimethylbenzimidazole + nicotinate beta-D-ribonucleotide = alpha-ribazole 5'-phosphate + nicotinate + H(+). Its pathway is nucleoside biosynthesis; alpha-ribazole biosynthesis; alpha-ribazole from 5,6-dimethylbenzimidazole: step 1/2. Functionally, catalyzes the synthesis of alpha-ribazole-5'-phosphate from nicotinate mononucleotide (NAMN) and 5,6-dimethylbenzimidazole (DMB). The protein is Nicotinate-nucleotide--dimethylbenzimidazole phosphoribosyltransferase of Vibrio atlanticus (strain LGP32) (Vibrio splendidus (strain Mel32)).